Here is a 285-residue protein sequence, read N- to C-terminus: MRSNLPLNALRAFEASARHLSFTRAALELCVTQAAVSQQVRILEDRLNRVLFKRLPRGLEMTDEAQALFAVLTDAFGQIDTIFRQFEGGEYREVLTVAAVGTFAVGWLLPRIEQFRQAHPFVELRLRTNNNVVNLAAEGLDFAIRFGNGLWPATHNEMLFEAPLTVLCTPETAQRLRRPADLLQENLLRSYRVDEWDNWFAAAGVTAERINGAVFDSSRLMVETVIHTGGAALVPAVMFARELAAGQLVRPFDIEIQMGYWLTHLKSKPMTPAMEIFRDWIVKMA.

Residues 5 to 62 (LPLNALRAFEASARHLSFTRAALELCVTQAAVSQQVRILEDRLNRVLFKRLPRGLEMT) form the HTH lysR-type domain. A DNA-binding region (H-T-H motif) is located at residues 22-41 (FTRAALELCVTQAAVSQQVR).

This sequence belongs to the LysR transcriptional regulatory family.

It is found in the cytoplasm. Its function is as follows. This protein is a positive regulator of gene expression of beta-lactamase (AmpC). This is HTH-type transcriptional activator AmpR (ampR) from Citrobacter koseri (Citrobacter diversus).